A 198-amino-acid polypeptide reads, in one-letter code: Alkyl hydroperoxide reductase C (198 aa).

Residues Thr2 to Phe163 enclose the Thioredoxin domain. The active-site Cysteine sulfenic acid (-SOH) intermediate is the Cys50.

The protein belongs to the peroxiredoxin family. AhpC/Prx1 subfamily. As to quaternary structure, homodimer; disulfide-linked, upon oxidation. 5 homodimers assemble to form a ring-like decamer.

The protein localises to the cytoplasm. It catalyses the reaction a hydroperoxide + NADH + H(+) = an alcohol + NAD(+) + H2O. Functionally, thiol-specific peroxidase that catalyzes the reduction of hydrogen peroxide and organic hydroperoxides to water and alcohols, respectively. Plays a role in cell protection against oxidative stress by detoxifying peroxides. The polypeptide is Alkyl hydroperoxide reductase C (Buchnera aphidicola subsp. Schizaphis graminum (strain Sg)).